A 59-amino-acid polypeptide reads, in one-letter code: Large ribosomal subunit protein uL30 (59 aa).

It belongs to the universal ribosomal protein uL30 family. As to quaternary structure, part of the 50S ribosomal subunit.

This chain is Large ribosomal subunit protein uL30, found in Ectopseudomonas mendocina (strain ymp) (Pseudomonas mendocina).